A 234-amino-acid polypeptide reads, in one-letter code: Leucyl/phenylalanyl-tRNA--protein transferase (234 aa).

The protein belongs to the L/F-transferase family.

The protein resides in the cytoplasm. The enzyme catalyses N-terminal L-lysyl-[protein] + L-leucyl-tRNA(Leu) = N-terminal L-leucyl-L-lysyl-[protein] + tRNA(Leu) + H(+). It carries out the reaction N-terminal L-arginyl-[protein] + L-leucyl-tRNA(Leu) = N-terminal L-leucyl-L-arginyl-[protein] + tRNA(Leu) + H(+). It catalyses the reaction L-phenylalanyl-tRNA(Phe) + an N-terminal L-alpha-aminoacyl-[protein] = an N-terminal L-phenylalanyl-L-alpha-aminoacyl-[protein] + tRNA(Phe). Functionally, functions in the N-end rule pathway of protein degradation where it conjugates Leu, Phe and, less efficiently, Met from aminoacyl-tRNAs to the N-termini of proteins containing an N-terminal arginine or lysine. The sequence is that of Leucyl/phenylalanyl-tRNA--protein transferase from Nitrosomonas eutropha (strain DSM 101675 / C91 / Nm57).